The chain runs to 193 residues: Thymidine kinase (193 aa).

ATP-binding positions include 9-16 and 87-90; these read STMNAGKS and DEAQ. The active-site Proton acceptor is the E88. Residues C145, C147, C182, and H185 each contribute to the Zn(2+) site.

The protein belongs to the thymidine kinase family. As to quaternary structure, homotetramer.

It localises to the cytoplasm. The enzyme catalyses thymidine + ATP = dTMP + ADP + H(+). In Haemophilus influenzae (strain ATCC 51907 / DSM 11121 / KW20 / Rd), this protein is Thymidine kinase.